The following is a 485-amino-acid chain: Leukocyte receptor cluster member 9 (485 aa).

A C3H1-type zinc finger spans residues 8-35 (SEAPAVCRFFLEGRCRFGARCRQPHPGA). A disordered region spans residues 212–247 (ETRTGLDSSLETPEVDGPTKETGLNGTTELEMPDPS).

The protein is Leukocyte receptor cluster member 9 (Leng9) of Mus musculus (Mouse).